Here is a 133-residue protein sequence, read N- to C-terminus: Phosphoribosyl-AMP cyclohydrolase (133 aa).

Mg(2+) is bound at residue aspartate 77. Cysteine 78 contacts Zn(2+). The Mg(2+) site is built by aspartate 79 and aspartate 81. Residues cysteine 95 and cysteine 102 each coordinate Zn(2+).

It belongs to the PRA-CH family. As to quaternary structure, homodimer. It depends on Mg(2+) as a cofactor. Requires Zn(2+) as cofactor.

The protein resides in the cytoplasm. It carries out the reaction 1-(5-phospho-beta-D-ribosyl)-5'-AMP + H2O = 1-(5-phospho-beta-D-ribosyl)-5-[(5-phospho-beta-D-ribosylamino)methylideneamino]imidazole-4-carboxamide. Its pathway is amino-acid biosynthesis; L-histidine biosynthesis; L-histidine from 5-phospho-alpha-D-ribose 1-diphosphate: step 3/9. Functionally, catalyzes the hydrolysis of the adenine ring of phosphoribosyl-AMP. The protein is Phosphoribosyl-AMP cyclohydrolase of Azotobacter chroococcum mcd 1.